Consider the following 256-residue polypeptide: Protein FixA (256 aa).

The protein belongs to the ETF beta-subunit/FixA family. Heterodimer of FixA and FixB.

It functions in the pathway amine and polyamine metabolism; carnitine metabolism. In terms of biological role, required for anaerobic carnitine reduction. May bring reductant to CaiA. This chain is Protein FixA, found in Escherichia coli O6:H1 (strain CFT073 / ATCC 700928 / UPEC).